The following is a 396-amino-acid chain: S-adenosylmethionine synthase (396 aa).

H16 is a binding site for ATP. D18 is a Mg(2+) binding site. E44 contacts K(+). L-methionine-binding residues include E57 and Q100. The interval 100–110 (QSPDIAQGVDR) is flexible loop. Residues 167–169 (DAK), 233–234 (RF), D242, 248–249 (RK), A265, and K269 contribute to the ATP site. D242 contacts L-methionine. K273 provides a ligand contact to L-methionine.

Belongs to the AdoMet synthase family. In terms of assembly, homotetramer; dimer of dimers. Mg(2+) serves as cofactor. K(+) is required as a cofactor.

The protein resides in the cytoplasm. The catalysed reaction is L-methionine + ATP + H2O = S-adenosyl-L-methionine + phosphate + diphosphate. It functions in the pathway amino-acid biosynthesis; S-adenosyl-L-methionine biosynthesis; S-adenosyl-L-methionine from L-methionine: step 1/1. Its function is as follows. Catalyzes the formation of S-adenosylmethionine (AdoMet) from methionine and ATP. The overall synthetic reaction is composed of two sequential steps, AdoMet formation and the subsequent tripolyphosphate hydrolysis which occurs prior to release of AdoMet from the enzyme. In Paraburkholderia phytofirmans (strain DSM 17436 / LMG 22146 / PsJN) (Burkholderia phytofirmans), this protein is S-adenosylmethionine synthase.